We begin with the raw amino-acid sequence, 94 residues long: Integration host factor subunit beta (94 aa).

It belongs to the bacterial histone-like protein family. In terms of assembly, heterodimer of an alpha and a beta chain.

Functionally, this protein is one of the two subunits of integration host factor, a specific DNA-binding protein that functions in genetic recombination as well as in transcriptional and translational control. The protein is Integration host factor subunit beta of Buchnera aphidicola subsp. Acyrthosiphon pisum (strain 5A).